A 422-amino-acid polypeptide reads, in one-letter code: UPF0761 membrane protein Paes_1471 (422 aa).

6 helical membrane passes run 47–67 (LLSI…SPVF), 103–123 (SVPT…ISTI), 143–163 (FTLY…SLVA), 185–205 (LLLL…ILVP), 208–228 (KVKF…FEFS), and 247–267 (GALS…VVAL).

Belongs to the UPF0761 family.

It localises to the cell inner membrane. The protein is UPF0761 membrane protein Paes_1471 of Prosthecochloris aestuarii (strain DSM 271 / SK 413).